The following is a 267-amino-acid chain: Pyridoxine 5'-phosphate synthase (267 aa).

3-amino-2-oxopropyl phosphate is bound at residue asparagine 8. Position 10–11 (10–11) interacts with 1-deoxy-D-xylulose 5-phosphate; it reads DH. A 3-amino-2-oxopropyl phosphate-binding site is contributed by arginine 19. The Proton acceptor role is filled by histidine 44. Residues arginine 46 and histidine 51 each contribute to the 1-deoxy-D-xylulose 5-phosphate site. Catalysis depends on glutamate 71, which acts as the Proton acceptor. Threonine 101 is a binding site for 1-deoxy-D-xylulose 5-phosphate. Residue histidine 219 is the Proton donor of the active site. 3-amino-2-oxopropyl phosphate is bound by residues glycine 220 and 241–242; that span reads GH.

Belongs to the PNP synthase family. In terms of assembly, homooctamer; tetramer of dimers.

It localises to the cytoplasm. It carries out the reaction 3-amino-2-oxopropyl phosphate + 1-deoxy-D-xylulose 5-phosphate = pyridoxine 5'-phosphate + phosphate + 2 H2O + H(+). It functions in the pathway cofactor biosynthesis; pyridoxine 5'-phosphate biosynthesis; pyridoxine 5'-phosphate from D-erythrose 4-phosphate: step 5/5. Its function is as follows. Catalyzes the complicated ring closure reaction between the two acyclic compounds 1-deoxy-D-xylulose-5-phosphate (DXP) and 3-amino-2-oxopropyl phosphate (1-amino-acetone-3-phosphate or AAP) to form pyridoxine 5'-phosphate (PNP) and inorganic phosphate. The polypeptide is Pyridoxine 5'-phosphate synthase (Helicobacter hepaticus (strain ATCC 51449 / 3B1)).